A 349-amino-acid chain; its full sequence is Putative ABC transporter permease protein MJ0087 (349 aa).

The next 9 helical transmembrane spans lie at 15–35 (IIFG…ALCV), 69–89 (IFAA…MQCI), 100–120 (MGIS…FGFG), 135–155 (MITI…LLLA), 166–186 (ILAG…IQYF), 206–226 (AIWT…IYFM), 254–274 (LIGM…LGII), 295–315 (FLIP…DTFA), and 318–338 (IIAP…APMF).

Belongs to the binding-protein-dependent transport system permease family. FecCD subfamily.

It localises to the cell membrane. Functionally, probably part of a binding-protein-dependent transport system. Probably responsible for the translocation of the substrate across the membrane. In Methanocaldococcus jannaschii (strain ATCC 43067 / DSM 2661 / JAL-1 / JCM 10045 / NBRC 100440) (Methanococcus jannaschii), this protein is Putative ABC transporter permease protein MJ0087.